A 419-amino-acid chain; its full sequence is L-rhamnose isomerase (419 aa).

3 residues coordinate Mn(2+): His-262, Asp-294, and Asp-296.

The protein belongs to the rhamnose isomerase family. As to quaternary structure, homotetramer. The cofactor is Mn(2+).

The protein resides in the cytoplasm. It catalyses the reaction L-rhamnopyranose = L-rhamnulose. The protein operates within carbohydrate degradation; L-rhamnose degradation; glycerone phosphate from L-rhamnose: step 1/3. Catalyzes the interconversion of L-rhamnose and L-rhamnulose. The chain is L-rhamnose isomerase from Citrobacter koseri (strain ATCC BAA-895 / CDC 4225-83 / SGSC4696).